Consider the following 617-residue polypeptide: Dihydroxy-acid dehydratase (617 aa).

Position 81 (Asp81) interacts with Mg(2+). Cys122 is a [2Fe-2S] cluster binding site. Residues Asp123 and Lys124 each contribute to the Mg(2+) site. An N6-carboxylysine modification is found at Lys124. Cys195 contributes to the [2Fe-2S] cluster binding site. Position 491 (Glu491) interacts with Mg(2+). The active-site Proton acceptor is Ser517.

It belongs to the IlvD/Edd family. As to quaternary structure, homodimer. It depends on [2Fe-2S] cluster as a cofactor. Mg(2+) is required as a cofactor.

It carries out the reaction (2R)-2,3-dihydroxy-3-methylbutanoate = 3-methyl-2-oxobutanoate + H2O. The enzyme catalyses (2R,3R)-2,3-dihydroxy-3-methylpentanoate = (S)-3-methyl-2-oxopentanoate + H2O. The protein operates within amino-acid biosynthesis; L-isoleucine biosynthesis; L-isoleucine from 2-oxobutanoate: step 3/4. It participates in amino-acid biosynthesis; L-valine biosynthesis; L-valine from pyruvate: step 3/4. Functions in the biosynthesis of branched-chain amino acids. Catalyzes the dehydration of (2R,3R)-2,3-dihydroxy-3-methylpentanoate (2,3-dihydroxy-3-methylvalerate) into 2-oxo-3-methylpentanoate (2-oxo-3-methylvalerate) and of (2R)-2,3-dihydroxy-3-methylbutanoate (2,3-dihydroxyisovalerate) into 2-oxo-3-methylbutanoate (2-oxoisovalerate), the penultimate precursor to L-isoleucine and L-valine, respectively. This chain is Dihydroxy-acid dehydratase, found in Buchnera aphidicola subsp. Schizaphis graminum (strain Sg).